The chain runs to 63 residues: Cecropin-C (63 aa).

An N-terminal signal peptide occupies residues 1–23 (MNFYKIFVFVALILAISIGQSEA). R62 carries the arginine amide modification.

It belongs to the cecropin family.

It is found in the secreted. Functionally, cecropins have lytic and antibacterial activity against several Gram-positive and Gram-negative bacteria. The polypeptide is Cecropin-C (CecC) (Drosophila mauritiana (Fruit fly)).